The chain runs to 373 residues: uncharacterized protein (373 aa).

The chain crosses the membrane as a helical span at residues 180 to 202 (YYVVALGTLALGSILGYTAKYVW).

The protein localises to the membrane. This is an uncharacterized protein from Rickettsia prowazekii (strain Madrid E).